Consider the following 227-residue polypeptide: MAYPFQLGLQDATSPIMEELLHFHDHTLMIVFLISSLVLYIISSMLTTKLTHTSTMDAQEVETVWTILPAIILVLIALPSLRILYMMDETNNPSLTVKTMGHQWYWSYEYTDYEDLNFDSYMIPTQELKPGELRLLEVDNRVVLPMEMTIRMLISSEDVLHSWAVPSLGLKTDAIPGRLNQTTLMAMRPGLYYGQCSEICGSNHSFMPIVLEMVPLSYFETWSALMV.

Residues 1–14 (MAYPFQLGLQDATS) lie on the Mitochondrial intermembrane side of the membrane. The helical transmembrane segment at 15–45 (PIMEELLHFHDHTLMIVFLISSLVLYIISSM) threads the bilayer. The Mitochondrial matrix portion of the chain corresponds to 46 to 59 (LTTKLTHTSTMDAQ). Residues 60 to 87 (EVETVWTILPAIILVLIALPSLRILYMM) form a helical membrane-spanning segment. The Mitochondrial intermembrane segment spans residues 88-227 (DETNNPSLTV…YFETWSALMV (140 aa)). Cu cation-binding residues include His-161, Cys-196, Glu-198, Cys-200, His-204, and Met-207. Position 198 (Glu-198) interacts with Mg(2+). Position 218 is a phosphotyrosine (Tyr-218).

The protein belongs to the cytochrome c oxidase subunit 2 family. As to quaternary structure, component of the cytochrome c oxidase (complex IV, CIV), a multisubunit enzyme composed of 14 subunits. The complex is composed of a catalytic core of 3 subunits MT-CO1, MT-CO2 and MT-CO3, encoded in the mitochondrial DNA, and 11 supernumerary subunits COX4I, COX5A, COX5B, COX6A, COX6B, COX6C, COX7A, COX7B, COX7C, COX8 and NDUFA4, which are encoded in the nuclear genome. The complex exists as a monomer or a dimer and forms supercomplexes (SCs) in the inner mitochondrial membrane with NADH-ubiquinone oxidoreductase (complex I, CI) and ubiquinol-cytochrome c oxidoreductase (cytochrome b-c1 complex, complex III, CIII), resulting in different assemblies (supercomplex SCI(1)III(2)IV(1) and megacomplex MCI(2)III(2)IV(2)). Found in a complex with TMEM177, COA6, COX18, COX20, SCO1 and SCO2. Interacts with TMEM177 in a COX20-dependent manner. Interacts with COX20. Interacts with COX16. Cu cation is required as a cofactor.

Its subcellular location is the mitochondrion inner membrane. The enzyme catalyses 4 Fe(II)-[cytochrome c] + O2 + 8 H(+)(in) = 4 Fe(III)-[cytochrome c] + 2 H2O + 4 H(+)(out). Its function is as follows. Component of the cytochrome c oxidase, the last enzyme in the mitochondrial electron transport chain which drives oxidative phosphorylation. The respiratory chain contains 3 multisubunit complexes succinate dehydrogenase (complex II, CII), ubiquinol-cytochrome c oxidoreductase (cytochrome b-c1 complex, complex III, CIII) and cytochrome c oxidase (complex IV, CIV), that cooperate to transfer electrons derived from NADH and succinate to molecular oxygen, creating an electrochemical gradient over the inner membrane that drives transmembrane transport and the ATP synthase. Cytochrome c oxidase is the component of the respiratory chain that catalyzes the reduction of oxygen to water. Electrons originating from reduced cytochrome c in the intermembrane space (IMS) are transferred via the dinuclear copper A center (CU(A)) of subunit 2 and heme A of subunit 1 to the active site in subunit 1, a binuclear center (BNC) formed by heme A3 and copper B (CU(B)). The BNC reduces molecular oxygen to 2 water molecules using 4 electrons from cytochrome c in the IMS and 4 protons from the mitochondrial matrix. This chain is Cytochrome c oxidase subunit 2 (MT-CO2), found in Chrysocyon brachyurus (Maned wolf).